The primary structure comprises 251 residues: Pyridoxine 5'-phosphate synthase (251 aa).

N7 serves as a coordination point for 3-amino-2-oxopropyl phosphate. A 1-deoxy-D-xylulose 5-phosphate-binding site is contributed by 9–10; that stretch reads DH. R18 provides a ligand contact to 3-amino-2-oxopropyl phosphate. The Proton acceptor role is filled by H43. 1-deoxy-D-xylulose 5-phosphate contacts are provided by R45 and H50. Residue E70 is the Proton acceptor of the active site. T100 contacts 1-deoxy-D-xylulose 5-phosphate. H198 functions as the Proton donor in the catalytic mechanism. Residues A199 and 220-221 contribute to the 3-amino-2-oxopropyl phosphate site; that span reads GH.

This sequence belongs to the PNP synthase family. In terms of assembly, homooctamer; tetramer of dimers.

It localises to the cytoplasm. It catalyses the reaction 3-amino-2-oxopropyl phosphate + 1-deoxy-D-xylulose 5-phosphate = pyridoxine 5'-phosphate + phosphate + 2 H2O + H(+). It functions in the pathway cofactor biosynthesis; pyridoxine 5'-phosphate biosynthesis; pyridoxine 5'-phosphate from D-erythrose 4-phosphate: step 5/5. Functionally, catalyzes the complicated ring closure reaction between the two acyclic compounds 1-deoxy-D-xylulose-5-phosphate (DXP) and 3-amino-2-oxopropyl phosphate (1-amino-acetone-3-phosphate or AAP) to form pyridoxine 5'-phosphate (PNP) and inorganic phosphate. This Dechloromonas aromatica (strain RCB) protein is Pyridoxine 5'-phosphate synthase.